The primary structure comprises 238 residues: Pyridoxine 5'-phosphate synthase (238 aa).

3-amino-2-oxopropyl phosphate is bound at residue asparagine 7. Residue 9–10 participates in 1-deoxy-D-xylulose 5-phosphate binding; the sequence is DH. Arginine 18 is a 3-amino-2-oxopropyl phosphate binding site. The active-site Proton acceptor is histidine 43. Residues arginine 45 and histidine 50 each coordinate 1-deoxy-D-xylulose 5-phosphate. The active-site Proton acceptor is the glutamate 70. Threonine 100 serves as a coordination point for 1-deoxy-D-xylulose 5-phosphate. Histidine 190 serves as the catalytic Proton donor. 3-amino-2-oxopropyl phosphate-binding positions include glycine 191 and 212-213; that span reads GH.

It belongs to the PNP synthase family. In terms of assembly, homooctamer; tetramer of dimers.

Its subcellular location is the cytoplasm. The catalysed reaction is 3-amino-2-oxopropyl phosphate + 1-deoxy-D-xylulose 5-phosphate = pyridoxine 5'-phosphate + phosphate + 2 H2O + H(+). It participates in cofactor biosynthesis; pyridoxine 5'-phosphate biosynthesis; pyridoxine 5'-phosphate from D-erythrose 4-phosphate: step 5/5. In terms of biological role, catalyzes the complicated ring closure reaction between the two acyclic compounds 1-deoxy-D-xylulose-5-phosphate (DXP) and 3-amino-2-oxopropyl phosphate (1-amino-acetone-3-phosphate or AAP) to form pyridoxine 5'-phosphate (PNP) and inorganic phosphate. This Prochlorococcus marinus (strain MIT 9515) protein is Pyridoxine 5'-phosphate synthase.